The primary structure comprises 52 residues: Large ribosomal subunit protein eL39 (52 aa).

The protein belongs to the eukaryotic ribosomal protein eL39 family.

The sequence is that of Large ribosomal subunit protein eL39 from Desulfurococcus amylolyticus (strain DSM 18924 / JCM 16383 / VKM B-2413 / 1221n) (Desulfurococcus kamchatkensis).